Here is a 140-residue protein sequence, read N- to C-terminus: Large ribosomal subunit protein uL11 (140 aa).

The protein belongs to the universal ribosomal protein uL11 family. Part of the ribosomal stalk of the 50S ribosomal subunit. Interacts with L10 and the large rRNA to form the base of the stalk. L10 forms an elongated spine to which L12 dimers bind in a sequential fashion forming a multimeric L10(L12)X complex. Post-translationally, one or more lysine residues are methylated.

Its function is as follows. Forms part of the ribosomal stalk which helps the ribosome interact with GTP-bound translation factors. This is Large ribosomal subunit protein uL11 from Nitratidesulfovibrio vulgaris (strain DSM 19637 / Miyazaki F) (Desulfovibrio vulgaris).